The chain runs to 375 residues: tRNA (guanine(26)-N(2))-dimethyltransferase (375 aa).

The Trm1 methyltransferase domain maps to 2-368 (KYITEGNTKL…AKLIDIVEFI (367 aa)). 5 residues coordinate S-adenosyl-L-methionine: Arg35, Arg66, Asp89, Asp116, and Ala117.

Belongs to the class I-like SAM-binding methyltransferase superfamily. Trm1 family.

It catalyses the reaction guanosine(26) in tRNA + 2 S-adenosyl-L-methionine = N(2)-dimethylguanosine(26) in tRNA + 2 S-adenosyl-L-homocysteine + 2 H(+). Its function is as follows. Dimethylates a single guanine residue at position 26 of a number of tRNAs using S-adenosyl-L-methionine as donor of the methyl groups. In Methanococcus aeolicus (strain ATCC BAA-1280 / DSM 17508 / OCM 812 / Nankai-3), this protein is tRNA (guanine(26)-N(2))-dimethyltransferase.